A 417-amino-acid chain; its full sequence is D-glycerate 2-kinase (417 aa).

The protein belongs to the glycerate kinase type-1 family. In terms of assembly, homodimer. Requires Mg(2+) as cofactor.

The catalysed reaction is (R)-glycerate + ATP = (2R)-2-phosphoglycerate + ADP + H(+). Functionally, involved in the degradation of serine via 3-hydroxypyruvate. Catalyzes the ATP-dependent phosphorylation of D-glycerate to 2-phosphoglycerate. This chain is D-glycerate 2-kinase, found in Thermotoga maritima (strain ATCC 43589 / DSM 3109 / JCM 10099 / NBRC 100826 / MSB8).